The following is a 92-amino-acid chain: Small ribosomal subunit protein uS19 (92 aa).

It belongs to the universal ribosomal protein uS19 family.

Its function is as follows. Protein S19 forms a complex with S13 that binds strongly to the 16S ribosomal RNA. This Lactococcus lactis subsp. cremoris (strain MG1363) protein is Small ribosomal subunit protein uS19.